A 350-amino-acid chain; its full sequence is Ion-translocating oxidoreductase complex subunit D (350 aa).

3 consecutive transmembrane segments (helical) span residues 25-45 (ALCLIPGILVQTLFFGFGSLI), 89-109 (IPPLAPWWLVVIGSLFAIIIV), and 124-144 (AMAGYVVLLVSFPLQMTSWVA). Threonine 185 is subject to FMN phosphoryl threonine. The next 5 helical transmembrane spans lie at 212 to 232 (SYGVGWFWVNLAYLAGGLVLL), 239 to 259 (WHISVGILAALFVCASFGFLI), 265 to 285 (VSPLFHWFSGGTMLAVFFIAT), 298 to 318 (LIFGASIGIIIYLIRTYGGYP), and 319 to 339 (DAVAFAVLLANMCAPFIDHYV).

It belongs to the NqrB/RnfD family. The complex is composed of six subunits: RnfA, RnfB, RnfC, RnfD, RnfE and RnfG. FMN is required as a cofactor.

It localises to the cell inner membrane. In terms of biological role, part of a membrane-bound complex that couples electron transfer with translocation of ions across the membrane. The polypeptide is Ion-translocating oxidoreductase complex subunit D (Shewanella denitrificans (strain OS217 / ATCC BAA-1090 / DSM 15013)).